We begin with the raw amino-acid sequence, 267 residues long: 4-hydroxy-tetrahydrodipicolinate reductase (267 aa).

NAD(+) is bound by residues Gly-8–Met-13 and Asp-34. Residue Arg-35 participates in NADP(+) binding. NAD(+)-binding positions include Gly-98–Thr-100 and Ala-122–Phe-125. Residue His-155 is the Proton donor/acceptor of the active site. His-156 lines the (S)-2,3,4,5-tetrahydrodipicolinate pocket. The active-site Proton donor is Lys-159. Gly-165–Thr-166 contacts (S)-2,3,4,5-tetrahydrodipicolinate.

This sequence belongs to the DapB family.

Its subcellular location is the cytoplasm. The catalysed reaction is (S)-2,3,4,5-tetrahydrodipicolinate + NAD(+) + H2O = (2S,4S)-4-hydroxy-2,3,4,5-tetrahydrodipicolinate + NADH + H(+). It catalyses the reaction (S)-2,3,4,5-tetrahydrodipicolinate + NADP(+) + H2O = (2S,4S)-4-hydroxy-2,3,4,5-tetrahydrodipicolinate + NADPH + H(+). Its pathway is amino-acid biosynthesis; L-lysine biosynthesis via DAP pathway; (S)-tetrahydrodipicolinate from L-aspartate: step 4/4. In terms of biological role, catalyzes the conversion of 4-hydroxy-tetrahydrodipicolinate (HTPA) to tetrahydrodipicolinate. This chain is 4-hydroxy-tetrahydrodipicolinate reductase, found in Pseudomonas putida (strain ATCC 700007 / DSM 6899 / JCM 31910 / BCRC 17059 / LMG 24140 / F1).